A 498-amino-acid polypeptide reads, in one-letter code: Angiopoietin-4 (498 aa).

A signal peptide spans 1-22 (MPSPPAMLLGGLLLIVASTTVA). A disordered region spans residues 51–80 (EPEPCPPEPEAFGGSNSLQRDSPAATLNLG). A coiled-coil region spans residues 85-109 (QRMRQLEKMLENNTQWLQKLERYIQ). N-linked (GlcNAc...) asparagine glycans are attached at residues Asn-96, Asn-126, Asn-158, Asn-247, Asn-295, Asn-306, Asn-332, and Asn-424. The stretch at 186–254 (HELHRLQGHN…SSNSSLLQRQ (69 aa)) forms a coiled coil. Residues 277–497 (RAADQLFQDC…TTRMMVRPSG (221 aa)) form the Fibrinogen C-terminal domain. A disulfide bond links Cys-286 and Cys-315. The cysteines at positions 439 and 452 are disulfide-linked.

In terms of assembly, homodimer; disulfide-linked. Interacts with TEK/TIE2.

The protein resides in the secreted. Functionally, binds to TEK/TIE2, modulating ANGPT1 signaling. Can induce tyrosine phosphorylation of TEK/TIE2. Promotes endothelial cell survival, migration and angiogenesis. The polypeptide is Angiopoietin-4 (ANGPT4) (Bos taurus (Bovine)).